A 214-amino-acid chain; its full sequence is Putative nickel/cobalt efflux system MJ1092 (214 aa).

6 consecutive transmembrane segments (helical) span residues 2 to 22 (VMIM…LHAL), 46 to 66 (ILLG…LGIL), 79 to 99 (VHDM…IWII), 116 to 136 (VITL…AVLL), 149 to 169 (IYVA…AVAF), and 188 to 208 (LPLI…AHPI).

This sequence belongs to the NiCoT transporter (TC 2.A.52) family.

The protein localises to the cell membrane. Functionally, efflux system for nickel and cobalt. The protein is Putative nickel/cobalt efflux system MJ1092 of Methanocaldococcus jannaschii (strain ATCC 43067 / DSM 2661 / JAL-1 / JCM 10045 / NBRC 100440) (Methanococcus jannaschii).